A 546-amino-acid polypeptide reads, in one-letter code: CTP synthase (546 aa).

The segment at 1–266 (MTTNYIFVTG…DDLVCARFGI (266 aa)) is amidoligase domain. Serine 14 provides a ligand contact to CTP. Serine 14 is a binding site for UTP. ATP-binding positions include 15-20 (SLGKGI) and aspartate 72. Positions 72 and 140 each coordinate Mg(2+). CTP is bound by residues 147–149 (DIE), 187–192 (KTKPTQ), and lysine 223. UTP is bound by residues 187–192 (KTKPTQ) and lysine 223. 239 to 241 (KDV) contacts ATP. Residues 291–542 (TIGMVGKYIE…VKAAGQNARG (252 aa)) form the Glutamine amidotransferase type-1 domain. Glycine 352 contacts L-glutamine. Cysteine 379 (nucleophile; for glutamine hydrolysis) is an active-site residue. Residues 380–383 (LGMQ), glutamate 403, and arginine 470 contribute to the L-glutamine site. Active-site residues include histidine 515 and glutamate 517.

This sequence belongs to the CTP synthase family. Homotetramer.

It carries out the reaction UTP + L-glutamine + ATP + H2O = CTP + L-glutamate + ADP + phosphate + 2 H(+). The catalysed reaction is L-glutamine + H2O = L-glutamate + NH4(+). It catalyses the reaction UTP + NH4(+) + ATP = CTP + ADP + phosphate + 2 H(+). The protein operates within pyrimidine metabolism; CTP biosynthesis via de novo pathway; CTP from UDP: step 2/2. Allosterically activated by GTP, when glutamine is the substrate; GTP has no effect on the reaction when ammonia is the substrate. The allosteric effector GTP functions by stabilizing the protein conformation that binds the tetrahedral intermediate(s) formed during glutamine hydrolysis. Inhibited by the product CTP, via allosteric rather than competitive inhibition. Functionally, catalyzes the ATP-dependent amination of UTP to CTP with either L-glutamine or ammonia as the source of nitrogen. Regulates intracellular CTP levels through interactions with the four ribonucleotide triphosphates. The chain is CTP synthase from Vibrio campbellii (strain ATCC BAA-1116).